A 146-amino-acid chain; its full sequence is Anti-sigma F factor (146 aa).

The protein belongs to the anti-sigma-factor family.

It catalyses the reaction L-seryl-[protein] + ATP = O-phospho-L-seryl-[protein] + ADP + H(+). The catalysed reaction is L-threonyl-[protein] + ATP = O-phospho-L-threonyl-[protein] + ADP + H(+). Binds to sigma F and blocks its ability to form an RNA polymerase holoenzyme (E-sigma F). Phosphorylates SpoIIAA on a serine residue. This phosphorylation may enable SpoIIAA to act as an anti-anti-sigma factor that counteracts SpoIIAB and thus releases sigma F from inhibition. The sequence is that of Anti-sigma F factor from Anoxybacillus flavithermus (strain DSM 21510 / WK1).